Consider the following 569-residue polypeptide: Urease subunit alpha (569 aa).

The region spanning 131–569 (GSIDTHIHFI…VPMAQRYFLL (439 aa)) is the Urease domain. Residues H136, H138, and K219 each contribute to the Ni(2+) site. K219 bears the N6-carboxylysine mark. H221 is a substrate binding site. Positions 248 and 274 each coordinate Ni(2+). The active-site Proton donor is the H322. D362 provides a ligand contact to Ni(2+).

Belongs to the metallo-dependent hydrolases superfamily. Urease alpha subunit family. In terms of assembly, heterotrimer of UreA (gamma), UreB (beta) and UreC (alpha) subunits. Three heterotrimers associate to form the active enzyme. It depends on Ni cation as a cofactor. In terms of processing, carboxylation allows a single lysine to coordinate two nickel ions.

The protein localises to the cytoplasm. It catalyses the reaction urea + 2 H2O + H(+) = hydrogencarbonate + 2 NH4(+). It functions in the pathway nitrogen metabolism; urea degradation; CO(2) and NH(3) from urea (urease route): step 1/1. In Prochlorococcus marinus (strain MIT 9301), this protein is Urease subunit alpha.